The following is a 554-amino-acid chain: MFS-type transporter tstD (554 aa).

Composition is skewed to polar residues over residues 1–10 (MPEPFNSTMP) and 27–38 (QDSNQPPEMSAS). The interval 1-68 (MPEPFNSTMP…ESENNEPYSV (68 aa)) is disordered. A glycan (N-linked (GlcNAc...) asparagine) is linked at Asn-6. The span at 39–48 (SEKKHPENEN) shows a compositional bias: basic and acidic residues. The chain crosses the membrane as a helical span at residues 76-96 (LMVLAASLAGFFSPLSASIYY). Asn-107 and Asn-114 each carry an N-linked (GlcNAc...) asparagine glycan. A run of 5 helical transmembrane segments spans residues 115–135 (LTVT…ASFS), 142–162 (PGYA…ALQN), 173–193 (LQSA…SDII), 202–222 (IAFA…IGGL), and 231–251 (WIFW…FLFF). The segment at 281 to 300 (KEKQRQQRAENEEENANRQR) is disordered. The next 3 membrane-spanning stretches (helical) occupy residues 311 to 331 (VFVV…GVAF), 354 to 374 (IKVA…ALST), and 413 to 433 (IALP…WLMT). N-linked (GlcNAc...) asparagine glycosylation is present at Asn-437. The next 3 helical transmembrane spans lie at 442–462 (IILL…LNVL), 473–493 (MVTA…AAMI), and 504–524 (WSYT…LLTM).

Belongs to the major facilitator superfamily.

It is found in the membrane. Functionally, MFS-type transporter; part of the gene cluster that mediates the biosynthesis of the antihypercholesterolemic agents phomoidrides which are dimeric anhydrides. This Talaromyces stipitatus (strain ATCC 10500 / CBS 375.48 / QM 6759 / NRRL 1006) (Penicillium stipitatum) protein is MFS-type transporter tstD.